Here is a 146-residue protein sequence, read N- to C-terminus: Protein translocase subunit SecE (146 aa).

Residues 1–81 (MSDERYAASD…KVKKPKKSAD (81 aa)) are disordered. Residues 10-20 (DGGGTEVGSGT) are compositionally biased toward gly residues. The segment covering 45–54 (RAANASNTGA) has biased composition (polar residues). Over residues 69–81 (KEGKVKKPKKSAD) the composition is skewed to basic and acidic residues. Residues 118–138 (VVLAFLAFMVALVGLADFGLA) form a helical membrane-spanning segment.

It belongs to the SecE/SEC61-gamma family. Component of the Sec protein translocase complex. Heterotrimer consisting of SecY, SecE and SecG subunits. The heterotrimers can form oligomers, although 1 heterotrimer is thought to be able to translocate proteins. Interacts with the ribosome. Interacts with SecDF, and other proteins may be involved. Interacts with SecA.

The protein localises to the cell membrane. Functionally, essential subunit of the Sec protein translocation channel SecYEG. Clamps together the 2 halves of SecY. May contact the channel plug during translocation. This is Protein translocase subunit SecE from Mycobacterium leprae (strain TN).